Here is a 187-residue protein sequence, read N- to C-terminus: Casparian strip membrane protein 1 (187 aa).

Residues 1–10 (MKGSSEHGET) are compositionally biased toward basic and acidic residues. The tract at residues 1–20 (MKGSSEHGETSKQAPLGSSR) is disordered. The Cytoplasmic segment spans residues 1-27 (MKGSSEHGETSKQAPLGSSRGVSKGVS). A helical membrane pass occupies residues 28 to 48 (VLDLILRFIAIIGTLASAIAM). Over 49–75 (GTTNETLPFFTQFIRFKAQYSDLPTLT) the chain is Extracellular. An N-linked (GlcNAc...) asparagine glycan is attached at Asn-52. Residues 76–96 (FFVVANSIVCAYLTLSLPLSI) form a helical membrane-spanning segment. Residues 97 to 115 (VHIIRSRAKYSRLLLVVLD) are Cytoplasmic-facing. The chain crosses the membrane as a helical span at residues 116-136 (AAMLALVTPGASAAAAIVYLA). Residues 137–162 (HKGNVRANWLAICQQFDSFCERISGC) lie on the Extracellular side of the membrane. Residues 163 to 183 (LIGSFGAMVMLVLLLLLSAIA) traverse the membrane as a helical segment. At 184 to 187 (LARR) the chain is on the cytoplasmic side.

It belongs to the Casparian strip membrane proteins (CASP) family. Homodimer and heterodimers.

The protein resides in the cell membrane. Its function is as follows. Regulates membrane-cell wall junctions and localized cell wall deposition. Required for establishment of the Casparian strip membrane domain (CSD) and the subsequent formation of Casparian strips, a cell wall modification of the root endodermis that determines an apoplastic barrier between the intraorganismal apoplasm and the extraorganismal apoplasm and prevents lateral diffusion. The chain is Casparian strip membrane protein 1 from Zea mays (Maize).